The primary structure comprises 144 residues: Cysteine desulfuration protein SufE (144 aa).

The Cysteine persulfide intermediate role is filled by C51.

The protein belongs to the SufE family. Homodimer. Interacts with SufS.

It localises to the cytoplasm. Its pathway is cofactor biosynthesis; iron-sulfur cluster biosynthesis. In terms of biological role, participates in cysteine desulfuration mediated by SufS. Cysteine desulfuration mobilizes sulfur from L-cysteine to yield L-alanine and constitutes an essential step in sulfur metabolism for biosynthesis of a variety of sulfur-containing biomolecules. Functions as a sulfur acceptor for SufS, by mediating the direct transfer of the sulfur atom from the S-sulfanylcysteine of SufS, an intermediate product of cysteine desulfuration process. This chain is Cysteine desulfuration protein SufE, found in Wigglesworthia glossinidia brevipalpis.